A 96-amino-acid chain; its full sequence is Glycine-rich protein DC7.1 (96 aa).

The first 25 residues, 1–25 (MGSKIFLLLGLSIAFALLISSEVAA), serve as a signal peptide directing secretion. A disordered region spans residues 29 to 66 (SETTTEGASLDGGHHGGGGGGHYSGGGGHGGSHHGGGG). 2 tandem repeats follow at residues 42–50 (HHGGGGGGH) and 61–67 (HHGGGGH). The 2 approximate repeats of H-H-G(4,6)-H stretch occupies residues 42–67 (HHGGGGGGHYSGGGGHGGSHHGGGGH). The span at 43–66 (HGGGGGGHYSGGGGHGGSHHGGGG) shows a compositional bias: gly residues.

The protein belongs to the GRP family.

Its function is as follows. May be connected with the initiation of embryogenesis or with the metabolic changes produced by the removal of auxins. The sequence is that of Glycine-rich protein DC7.1 from Daucus carota (Wild carrot).